A 260-amino-acid chain; its full sequence is Triosephosphate isomerase (260 aa).

A substrate-binding site is contributed by 11-13; sequence NWK. The active-site Electrophile is the H103. The active-site Proton acceptor is E175. Residues G181, S220, and 241–242 each bind substrate; that span reads GG.

Belongs to the triosephosphate isomerase family. As to quaternary structure, homodimer.

The protein localises to the cytoplasm. The catalysed reaction is D-glyceraldehyde 3-phosphate = dihydroxyacetone phosphate. It functions in the pathway carbohydrate biosynthesis; gluconeogenesis. Its pathway is carbohydrate degradation; glycolysis; D-glyceraldehyde 3-phosphate from glycerone phosphate: step 1/1. Functionally, involved in the gluconeogenesis. Catalyzes stereospecifically the conversion of dihydroxyacetone phosphate (DHAP) to D-glyceraldehyde-3-phosphate (G3P). This Shewanella loihica (strain ATCC BAA-1088 / PV-4) protein is Triosephosphate isomerase.